The primary structure comprises 1117 residues: Guanylate cyclase D (1117 aa).

Positions 1–66 (MAGLQQGCHF…ADSLSLLAWA (66 aa)) are cleaved as a signal peptide. Residues 67–479 (RETFTLGVLG…CIRGVQPLGS (413 aa)) lie on the Extracellular side of the membrane. A disulfide bridge connects residues cysteine 121 and cysteine 149. The chain crosses the membrane as a helical span at residues 480–500 (LLTLTIACVLALVGGFLAYFI). Residues 501-1117 (RLGLQQLRLL…RKSGEAGPGP (617 aa)) lie on the Cytoplasmic side of the membrane. A disordered region spans residues 529–557 (TPSRRRPHVDSGSESRSVVDGGSPRSVTQ). One can recognise a Protein kinase domain in the interval 541 to 812 (SESRSVVDGG…PSLDQIYTQF (272 aa)). Positions 874 to 915 (MGTTVEPEYFDQVTIYFSDIVGFTTISALSEPIEVVGFLNDL) are interaction with NCALD. Positions 887–1017 (TIYFSDIVGF…DTVNTASRME (131 aa)) constitute a Guanylate cyclase domain. The disordered stretch occupies residues 1096 to 1117 (GFAKARQGLAEPRKSGEAGPGP).

The protein belongs to the adenylyl cyclase class-4/guanylyl cyclase family. Interacts (via the catalytic domain) with NCALD. As to expression, found in a subset of olfactory neurons in the main olfactory epithelium.

It localises to the cell projection. Its subcellular location is the cilium membrane. The enzyme catalyses GTP = 3',5'-cyclic GMP + diphosphate. Its activity is regulated as follows. Activated by Ca(2+). Functions as an olfactory receptor activated by urine odorants, uroguanylin and guanylin and as well by the volatile semiochemicals carbon disulfide (CS2) and carbon dioxide (CO2). Has guanylate cyclase activity upon binding of the ligand. Activation of GUCY2D neurons leads to the cGMP-dependent activation of the CNGA3 channels, membrane depolarization and an increase in action potential frequency. Signaling pathways activated by GUCY2D may trigger social behaviors such as acquisition of food preference. This Mus musculus (Mouse) protein is Guanylate cyclase D.